The sequence spans 66 residues: MPKMKTHRGSAKRFKKTGSGKLKRSHAYTSHLFANKSQKQKRKLRKGAIVSAGDFKRIKQQLANIK.

Over residues 1–26 (MPKMKTHRGSAKRFKKTGSGKLKRSH) the composition is skewed to basic residues. Positions 1-45 (MPKMKTHRGSAKRFKKTGSGKLKRSHAYTSHLFANKSQKQKRKLR) are disordered.

The protein belongs to the bacterial ribosomal protein bL35 family.

This is Large ribosomal subunit protein bL35 from Bacillus velezensis (strain DSM 23117 / BGSC 10A6 / LMG 26770 / FZB42) (Bacillus amyloliquefaciens subsp. plantarum).